Consider the following 90-residue polypeptide: uncharacterized protein (90 aa).

This is an uncharacterized protein from Saccharomyces cerevisiae (strain ATCC 204508 / S288c) (Baker's yeast).